The sequence spans 184 residues: MRAFLKILMVLIFMSVAYAKNPSTLSKEEEVLQHLQSFSAHFKQVLKSEKPLVYYGVLKAKAPNWALWVYEKPLKKEIYMNDKEVVIYEPNLFQATITPLKDKTDFFTILKRLKKQDDGSFKTTINKTTYRLIFKDGKPFSLEFKDEMNNLVTITFSQAEINPTIADEIFVFKPKDENIDIVRQ.

The signal sequence occupies residues methionine 1 to alanine 19.

Belongs to the LolA family. As to quaternary structure, monomer.

It is found in the periplasm. Functionally, participates in the translocation of lipoproteins from the inner membrane to the outer membrane. Only forms a complex with a lipoprotein if the residue after the N-terminal Cys is not an aspartate (The Asp acts as a targeting signal to indicate that the lipoprotein should stay in the inner membrane). This Helicobacter pylori (strain HPAG1) protein is Outer-membrane lipoprotein carrier protein.